A 441-amino-acid chain; its full sequence is Probable acetylornithine aminotransferase, mitochondrial (441 aa).

N6-(pyridoxal phosphate)lysine is present on K294.

It belongs to the class-III pyridoxal-phosphate-dependent aminotransferase family. Pyridoxal 5'-phosphate is required as a cofactor.

The protein resides in the mitochondrion matrix. The enzyme catalyses N(2)-acetyl-L-ornithine + 2-oxoglutarate = N-acetyl-L-glutamate 5-semialdehyde + L-glutamate. The protein operates within amino-acid biosynthesis; L-arginine biosynthesis; N(2)-acetyl-L-ornithine from L-glutamate: step 4/4. The sequence is that of Probable acetylornithine aminotransferase, mitochondrial (arg1) from Schizosaccharomyces pombe (strain 972 / ATCC 24843) (Fission yeast).